The following is a 406-amino-acid chain: 2,3-diketo-5-methylthiopentyl-1-phosphate enolase (406 aa).

Catalysis depends on K94, which acts as the Proton acceptor. Residues K143, 169-172 (KDDE), H260, G332, and 354-355 (GG) each bind substrate. Mg(2+) contacts are provided by K169, D171, and E172. Residue K169 is modified to N6-carboxylysine.

It belongs to the RuBisCO large chain family. Type IV subfamily. In terms of assembly, homodimer. Requires Mg(2+) as cofactor.

It catalyses the reaction 5-methylsulfanyl-2,3-dioxopentyl phosphate = 2-hydroxy-5-methylsulfanyl-3-oxopent-1-enyl phosphate. The protein operates within amino-acid biosynthesis; L-methionine biosynthesis via salvage pathway; L-methionine from S-methyl-5-thio-alpha-D-ribose 1-phosphate: step 3/6. Catalyzes the enolization of 2,3-diketo-5-methylthiopentyl-1-phosphate (DK-MTP-1-P) into 2-hydroxy-3-keto-5-methylthiopentenyl-1-phosphate (HK-MTPenyl-1-P). This is 2,3-diketo-5-methylthiopentyl-1-phosphate enolase from Bacillus pumilus (strain SAFR-032).